The chain runs to 779 residues: Lysosome membrane protein 2-A (779 aa).

The Cytoplasmic segment spans residues 1–17 (MVKRGCCHRKMVNHKGC). Residues 18–38 (LVSGIFLAVIGAVLFILAFAL) form a helical membrane-spanning segment. At 39 to 732 (LPHLINQTTQ…LLNSQFKLIK (694 aa)) the chain is on the lumenal side. N-linked (GlcNAc...) asparagine glycans are attached at residues Asn-44, Asn-86, Asn-95, Asn-114, Asn-117, Asn-201, Asn-239, Asn-262, Asn-266, Asn-277, Asn-369, Asn-410, Asn-440, Asn-508, Asn-543, Asn-601, Asn-619, Asn-651, and Asn-693. The chain crosses the membrane as a helical span at residues 733 to 753 (ILGFVPVIVVSIIGGIILIAG). Residues 754–779 (ISMFAFGFKKLRQQKQQGYQAIINNE) are Cytoplasmic-facing. The Tyrosine-type lysosomal sorting signal motif lies at 771-774 (GYQA).

This sequence belongs to the CD36 family. In terms of processing, heavily glycosylated.

The protein localises to the lysosome membrane. Functionally, may act as a lysosomal receptor. May be involved in macropinocytosis and fluid phase exocytosis. Binds to the anionic phospholipid phosphoinositol 4,5-bisphosphate, but not to phosphatidylcholine and only weakly to phosphatidylserine. The polypeptide is Lysosome membrane protein 2-A (lmpA) (Dictyostelium discoideum (Social amoeba)).